The chain runs to 357 residues: Enoyl-[acyl-carrier-protein] reductase, mitochondrial (357 aa).

The N-terminal 19 residues, 1–19, are a transit peptide targeting the mitochondrion; it reads MLRRGFLSRINAAQWSRQM. The region spanning 36–352 is the Enoyl reductase (ER) domain; that stretch reads EVLQLVEDKL…FKGFTGKKYI (317 aa). Tyr74 functions as the Proton donor in the catalytic mechanism. NADP(+) is bound by residues Asn147, 173-176, 196-198, 264-267, 289-291, Lys349, and Lys350; these read NSAV, RDR, YGGM, and FWM.

The protein belongs to the zinc-containing alcohol dehydrogenase family. Quinone oxidoreductase subfamily. Homodimer. Expressed in the central nervous system.

It localises to the mitochondrion. The enzyme catalyses a 2,3-saturated acyl-[ACP] + NADP(+) = a (2E)-enoyl-[ACP] + NADPH + H(+). Its function is as follows. Catalyzes the NADPH-dependent reduction of trans-2-enoyl thioesters in mitochondrial fatty acid synthesis (fatty acid synthesis type II). Fatty acid chain elongation in mitochondria uses acyl carrier protein (ACP) as an acyl group carrier, but the enzyme accepts both ACP and CoA thioesters as substrates in vitro. Involved in iron homeostasis; affecting Fe-S cluster assembly and ceramide metabolism. Required for proper morphology and bioenergetic functions of mitochondria. Required for maintenance of neurons, including photoreceptor neurons. This is Enoyl-[acyl-carrier-protein] reductase, mitochondrial from Drosophila melanogaster (Fruit fly).